The chain runs to 249 residues: PF03932 family protein CutC (249 aa).

The protein belongs to the CutC family.

The protein resides in the cytoplasm. This Bacteroides thetaiotaomicron (strain ATCC 29148 / DSM 2079 / JCM 5827 / CCUG 10774 / NCTC 10582 / VPI-5482 / E50) protein is PF03932 family protein CutC.